We begin with the raw amino-acid sequence, 280 residues long: Endochitinase A (280 aa).

A signal peptide spans 1 to 25 (MANAPRILALGLLALLCAAAGPAAA). Residues 26 to 60 (QNCGCQPNFCCSKFGYCGTTDAYCGDGCQSGPCRS) enclose the Chitin-binding type-1 domain. Cystine bridges form between Cys-28–Cys-36, Cys-30–Cys-42, Cys-35–Cys-49, and Cys-53–Cys-58. The hinge region (poly-Gly) stretch occupies residues 61–77 (GGGGGGGGGGGGGGSGG). The segment at 78–280 (ANVANVVTDA…RVDPGPNLTC (203 aa)) is catalytic. Residues Cys-100 and Cys-149 are joined by a disulfide bond. Glu-144 functions as the Proton donor in the catalytic mechanism. A glycan (N-linked (GlcNAc...) asparagine) is linked at Asn-155. Intrachain disulfides connect Cys-161/Cys-170 and Cys-248/Cys-280. The N-linked (GlcNAc...) asparagine glycan is linked to Asn-277.

It belongs to the glycosyl hydrolase 19 family. Chitinase class IV subfamily.

The protein localises to the secreted. It catalyses the reaction Random endo-hydrolysis of N-acetyl-beta-D-glucosaminide (1-&gt;4)-beta-linkages in chitin and chitodextrins.. With respect to regulation, inactivated by l-ethyl-3-(3-dimethylaminopropyl)carbodiimide (EDC) in the absence of exogenous nucleophiles (e.g. GlcNAc4, GlcNAc3 and GlcNAc2). Not inhibited by tetra-N-acetylchitopentaose or modified chitotetraose substrate TMG-chitotriomycin-pMP, containing a free, non-acetylated glucosaminyl residue or a N-trimethylamino glucosamine (TMG) residue at the non-reducing terminus, respectively. Functionally, defense against chitin-containing fungal pathogens. Hydrolyzes glycol chitin and tetra-N-acetylchitotetraose in vitro. Its action is countered by fungal polyglycine hydrolases and fungalysin, that cleave the chitin-binding domain from the protein. In Zea mays (Maize), this protein is Endochitinase A.